We begin with the raw amino-acid sequence, 321 residues long: Glucokinase (321 aa).

8-13 (GDVGGT) provides a ligand contact to ATP.

It belongs to the bacterial glucokinase family.

It localises to the cytoplasm. The enzyme catalyses D-glucose + ATP = D-glucose 6-phosphate + ADP + H(+). This is Glucokinase from Salmonella schwarzengrund (strain CVM19633).